A 350-amino-acid polypeptide reads, in one-letter code: MTDSPEIPYLLRAAKGEILPRPPVWMMRQAGRYMQIYRELRDKYPSFRERSENADLAIEISLQPWRAFQPDGVIMFSDILTPLAGIGIPFDIIESKGPIIDSPIRTQAQVDQLNPLDPDQSLPFIKTILKTLRQEVGNKSTVLGFVGAPWTLAAYAVEGKGSKSYSVIKGMAFSEPSVLHQFLDKLADMIATYVRYQIDCGAQVVQMFDSWAGQLTPQDYDVFALPYQQKVVRLVKETHPDTPLILYISGSAGVLERMGKSGVDIISVDWTVDLAEARQRLGKAMMVQGNIDPGVLFGSQSFIRERIIDTIRKAGNQGHILNLGHGVLVGTPEDNVRFFFETAKQFSYQD.

Substrate-binding positions include arginine 28 to arginine 32, aspartate 78, tyrosine 155, serine 210, and histidine 325.

This sequence belongs to the uroporphyrinogen decarboxylase family. As to quaternary structure, homodimer.

The protein localises to the cytoplasm. The enzyme catalyses uroporphyrinogen III + 4 H(+) = coproporphyrinogen III + 4 CO2. The protein operates within porphyrin-containing compound metabolism; protoporphyrin-IX biosynthesis; coproporphyrinogen-III from 5-aminolevulinate: step 4/4. Catalyzes the decarboxylation of four acetate groups of uroporphyrinogen-III to yield coproporphyrinogen-III. This Microcystis aeruginosa (strain NIES-843 / IAM M-2473) protein is Uroporphyrinogen decarboxylase.